Reading from the N-terminus, the 810-residue chain is MKRRSDALLGSFQATNVTPPSDNSNSTAGGANGSNSGTPTSTSGKKRNKLIKSCGFCRRRKLRCDQQKPMCSTCISRNLTTCQYAEEFNKNIEKKATYGPYPNADLLKKVEELENKIRILEAEKNTNSSASSMYTSPNFPPLGTSVGRGSTETSSPLPDGVINPYADRYYLQSKHSGRSTLYGPTSMRTQIANSNWGFIEKYKQLWAKVKVERNKWKQNNQKTMCRELGLLDESDWQPDPLIKQICRFLPSYNKALSILDDFFNDGACNEINVILDKAKVRRDFLDYFMPEKEVKAEGDRSIVYILSNPKKNYYKAAVILLILCLKYFHTDVPTPIEKFFTLLKGASTAKVFYIERAQMLILFYYHRETYSFGGDGSDLVNINECLVTTVTTIGLHLNIRETFKEHEVFMGSIESLENVWLMAIFIDYNISCNVGRPLLINKFYLDENQDHCILNSKSKTYEGKLKRYLKLTRPMLLTLYDRDKFPDLKAYSKRIINFVEEELGPLGHYTGENISEEVPLRESRILSMAVGLLLSFYALIHSVLKVRNIESKNNTFQLVLINFSIIVNTTIRCYRIDKALYPEKFEASNPHLPPHMALSMSLTAGLFSKTLVFFCSLIYFKLTLFENGLCLSNDMEVGWSDLTKLTVPLDKDLSLGTAMSLYSSIFDRLFTVGNKELIRTMHRSSQFVIELAIERTYRTILGNVIEFRKLTEETWLAQIKQELDPQSDNPSSEAKIVSDRQRDLSLAVPTPTPSIIPMLPSPGETKNHAKSQSEIIQMLTDEFWANYNSGWEELINQSEFSTLFDDYKDN.

The interval 1-47 (MKRRSDALLGSFQATNVTPPSDNSNSTAGGANGSNSGTPTSTSGKKR) is disordered. Over residues 12 to 22 (FQATNVTPPSD) the composition is skewed to polar residues. Low complexity predominate over residues 23 to 43 (NSNSTAGGANGSNSGTPTSTS). Residues 54–82 (CGFCRRRKLRCDQQKPMCSTCISRNLTTC) constitute a DNA-binding region (zn(2)-C6 fungal-type). A disordered region spans residues 722–742 (ELDPQSDNPSSEAKIVSDRQR).

It localises to the cytoplasm. Its subcellular location is the nucleus. Its function is as follows. Transcription factor involved in the regulation of multidrug resistance genes. Acts in concert with YRR1. In Saccharomyces cerevisiae (strain ATCC 204508 / S288c) (Baker's yeast), this protein is Zinc finger transcription factor YRR1 (YRR1).